A 373-amino-acid chain; its full sequence is Glutamine synthetase (373 aa).

A GS beta-grasp domain is found at 24 to 106; that stretch reads EKVQAMYIWI…VLCEVFKYNR (83 aa). The region spanning 113–373 is the GS catalytic domain; it reads LRHTCRRIMD…TGDEPFEYKN (261 aa). An ATP-binding site is contributed by Glu-134. Residues Glu-134, Glu-136, Glu-196, and Glu-203 each coordinate Mn(2+). 203–208 lines the ATP pocket; sequence EFQVGP. 246 to 247 is a binding site for L-glutamate; that stretch reads NW. Mn(2+) is bound at residue His-253. ATP-binding positions include 255 to 257, Arg-319, and Arg-324; that span reads NFS. Arg-319 is an L-glutamate binding site. 336–338 serves as a coordination point for ADP; sequence YFE. Position 338 (Glu-338) interacts with Mn(2+). Arg-340 is a binding site for L-glutamate.

The protein belongs to the glutamine synthetase family. As to quaternary structure, homooctamer and homotetramer. Biotin serves as cofactor. The cofactor is Mg(2+). It depends on Mn(2+) as a cofactor. Expressed in retina, brain and liver. Little or no detectable expression in breast muscle, pancreas and spleen.

It localises to the cytoplasm. Its subcellular location is the mitochondrion. It carries out the reaction L-glutamate + NH4(+) + ATP = L-glutamine + ADP + phosphate + H(+). It catalyses the reaction L-glutamate + H(+) = 4-aminobutanoate + CO2. Its activity is regulated as follows. Glutamate to glutamine ratio influences catalytic activity. At glutamate to glutamine ratios greater than 4, decarboxylase activity ceases. In the presence of manganese, synthetase activity is limited to concentrations between 10 mM and 20 mM, whereas decarboxylase activity is not affected. Both catalytic activities are inhibited by avidin. Functionally, glutamine synthetase that catalyzes the ATP-dependent conversion of glutamate and ammonia to glutamine. When expressed in liver, it may be involved in detoxifying intramitochondrially generated ammonia. Also acts as glutamate decarboxylase by catalyzing the production of 4-aminobutanoate (gamma-aminobutyric acid, GABA) in a pyridoxal phosphate-independent manner. This Gallus gallus (Chicken) protein is Glutamine synthetase.